Reading from the N-terminus, the 285-residue chain is CCR4-NOT transcription complex subunit 7 (285 aa).

A divalent metal cation contacts are provided by Asp40, Glu42, Asp161, Asp230, and Glu278.

Belongs to the CAF1 family. Component of the CCR4-NOT complex. The cofactor is Mn(2+). Requires Mg(2+) as cofactor. Co(2+) is required as a cofactor.

It localises to the nucleus. Its subcellular location is the cytoplasm. It carries out the reaction Exonucleolytic cleavage of poly(A) to 5'-AMP.. Functionally, has 3'-5' poly(A) exoribonuclease activity for synthetic poly(A) RNA substrate. Catalytic component of the CCR4-NOT complex which is one of the major cellular mRNA deadenylases and is linked to various cellular processes including bulk mRNA degradation, miRNA-mediated repression, translational repression during translational initiation and general transcription regulation. During miRNA-mediated repression the complex also seems to act as translational repressor during translational initiation. Additional complex functions may be a consequence of its influence on mRNA expression. This chain is CCR4-NOT transcription complex subunit 7 (CNOT7), found in Gallus gallus (Chicken).